The primary structure comprises 839 residues: Homeobox-leucine zipper protein HOX10 (839 aa).

Disordered regions lie at residues 1–24 (MAAA…SGMD) and 132–157 (QNTP…RDAS). A DNA-binding region (homeobox) is located at residues 24–87 (DSGKYVRYTP…NRRCRDKQRK (64 aa)). The stretch at 91–134 (RLQAVNRKLTAMNKLLMEENERLQKQVSQLVHENAHMRQQLQNT) forms a coiled coil. The region spanning 155–383 (DASNPSGLLS…IAQETSGEVV (229 aa)) is the START domain.

The protein belongs to the HD-ZIP homeobox family. Class III subfamily. In terms of tissue distribution, expressed in stems, leaf sheaths and blades and panicles.

It is found in the nucleus. Probable transcription factor. The protein is Homeobox-leucine zipper protein HOX10 (HOX10) of Oryza sativa subsp. indica (Rice).